A 247-amino-acid chain; its full sequence is E3 ubiquitin ligase TRIM40 (247 aa).

The RING-type zinc-finger motif lies at 12–55 (CPICLDPLKEAVSTDCRHLFCRMCLIRHMDKASVSGVLSCPVCR). A B box-type zinc finger spans residues 64 to 105 (GDNYICHTHQKRVCRFCESSRHLLCEECLQSPEHRAHTELSI). Zn(2+) contacts are provided by Cys69, His72, Cys91, and His97. Residues 111-148 (HYKERLNRRSRKLRKDLGDLQRLKAQEEKMLQALQVDW) adopt a coiled-coil conformation.

This sequence belongs to the TRIM/RBCC family. Interacts with NEDD8.

The catalysed reaction is S-ubiquitinyl-[E2 ubiquitin-conjugating enzyme]-L-cysteine + [acceptor protein]-L-lysine = [E2 ubiquitin-conjugating enzyme]-L-cysteine + N(6)-ubiquitinyl-[acceptor protein]-L-lysine.. Functionally, E3 ubiquitin-protein ligase that plays a role in the limitation of the innate immune response. Mediates inhibition of the RLR signaling pathway by ubiquitinating RIGI and IFIH1 receptors, leading to their proteasomal degradation. Also promotes the neddylation of IKBKG/NEMO, stabilizing NFKBIA, and thereby inhibiting of NF-kappa-B nuclear translocation and activation. The chain is E3 ubiquitin ligase TRIM40 (Trim40) from Rattus norvegicus (Rat).